Consider the following 251-residue polypeptide: Aliphatic sulfonates import ATP-binding protein SsuB (251 aa).

In terms of domain architecture, ABC transporter spans Val3 to Gln231. Gly39–Ser46 provides a ligand contact to ATP.

This sequence belongs to the ABC transporter superfamily. Aliphatic sulfonates importer (TC 3.A.1.17.2) family. In terms of assembly, the complex is composed of two ATP-binding proteins (SsuB), two transmembrane proteins (SsuC) and a solute-binding protein (SsuA).

It localises to the cell membrane. The enzyme catalyses ATP + H2O + aliphatic sulfonate-[sulfonate-binding protein]Side 1 = ADP + phosphate + aliphatic sulfonateSide 2 + [sulfonate-binding protein]Side 1.. Part of the ABC transporter complex SsuABC involved in aliphatic sulfonates import. Responsible for energy coupling to the transport system. The sequence is that of Aliphatic sulfonates import ATP-binding protein SsuB from Bacillus thuringiensis subsp. konkukian (strain 97-27).